A 294-amino-acid polypeptide reads, in one-letter code: Acetylglutamate kinase (294 aa).

Residues 69-70, arginine 91, and asparagine 190 contribute to the substrate site; that span reads GG.

It belongs to the acetylglutamate kinase family. ArgB subfamily.

It localises to the cytoplasm. The enzyme catalyses N-acetyl-L-glutamate + ATP = N-acetyl-L-glutamyl 5-phosphate + ADP. It functions in the pathway amino-acid biosynthesis; L-arginine biosynthesis; N(2)-acetyl-L-ornithine from L-glutamate: step 2/4. Functionally, catalyzes the ATP-dependent phosphorylation of N-acetyl-L-glutamate. The sequence is that of Acetylglutamate kinase from Mycobacterium bovis (strain ATCC BAA-935 / AF2122/97).